A 303-amino-acid polypeptide reads, in one-letter code: Acetaldehyde dehydrogenase 1 (303 aa).

Catalysis depends on Cys130, which acts as the Acyl-thioester intermediate. NAD(+) is bound by residues 161 to 169 (SVGPGTRKN) and Asn272.

The protein belongs to the acetaldehyde dehydrogenase family.

The catalysed reaction is acetaldehyde + NAD(+) + CoA = acetyl-CoA + NADH + H(+). This is Acetaldehyde dehydrogenase 1 from Methylibium petroleiphilum (strain ATCC BAA-1232 / LMG 22953 / PM1).